The sequence spans 442 residues: Citrate transporter CitP (442 aa).

Helical transmembrane passes span 27 to 47 (ISGI…IAIS), 59 to 79 (IFAL…LPIF), 83 to 103 (LGGG…TNVI), 114 to 134 (FING…SSLF), 151 to 171 (VAFI…VIIG), 177 to 197 (AILY…IVPL), 209 to 229 (SAGI…LAII), 267 to 287 (YVQL…GTML), 293 to 313 (GINA…FGLL), 321 to 341 (VIMF…AGVG), 349 to 369 (VLLA…IVAI), 387 to 409 (AAIT…VLAA), and 421 to 441 (MGNR…VTFM).

The protein belongs to the 2-hydroxycarboxylate transporter (2-HCT) (TC 2.A.24) family.

It localises to the cell membrane. The enzyme catalyses (R)-lactate(in) + citrate(out) = (R)-lactate(out) + citrate(in). The catalysed reaction is (S)-lactate(in) + citrate(out) = (S)-lactate(out) + citrate(in). It carries out the reaction citrate(in) + H(+)(in) = citrate(out) + H(+)(out). Its activity is regulated as follows. The transport of citrate is unaffected by the presence of citrate in the growth media. Secondary transporter involved in citrate metabolism. During cometabolism of citrate and glucose, catalyzes the uptake of divalent citrate into the cell coupled to the exit of monovalent lactate, the end product of glycolysis in L.lactis. The citrate/lactate exchange is electrogenic and results in the generation of a membrane potential. Plays an important role in resistance against lactate toxicity at low pH. In the absence of glucose, i.e. when no lactate is produced, CitP catalyzes the uptake of citrate in exchange with the citrate metabolism intermediates pyruvate and alpha-acetolactate, and the end product acetate. In the absence of glucose, CitP can also catalyze the proton-dependent transport of citrate. In vitro, shows a broad substrate specificity. Can transport a wide variety of mono- and dicarboxylates of the form X-CR(2)-COO(-), where X represents OH (2-hydroxy acid), O (2-keto acid), or H (acid) and R groups differ in size, hydrophobicity and composition. Many of the substrates are intermediates or products of amino acid metabolism, suggesting that CitP may have a broader physiological function than its role in citrate metabolism. The sequence is that of Citrate transporter CitP from Lactococcus lactis subsp. lactis (Streptococcus lactis).